The sequence spans 64 residues: MTTEITTVKCPTCKQAVIWDAASIYRPFCSKRCQLIDLGEWADEEKCIPSDDMVSDSEDWSETR.

Residues cysteine 10, cysteine 13, cysteine 29, and cysteine 33 each coordinate Zn(2+).

It belongs to the DNA gyrase inhibitor YacG family. In terms of assembly, interacts with GyrB. Zn(2+) is required as a cofactor.

Functionally, inhibits all the catalytic activities of DNA gyrase by preventing its interaction with DNA. Acts by binding directly to the C-terminal domain of GyrB, which probably disrupts DNA binding by the gyrase. The protein is DNA gyrase inhibitor YacG of Pectobacterium atrosepticum (strain SCRI 1043 / ATCC BAA-672) (Erwinia carotovora subsp. atroseptica).